The chain runs to 151 residues: Large ribosomal subunit protein bL9 (151 aa).

It belongs to the bacterial ribosomal protein bL9 family.

In terms of biological role, binds to the 23S rRNA. The sequence is that of Large ribosomal subunit protein bL9 from Nitrosospira multiformis (strain ATCC 25196 / NCIMB 11849 / C 71).